Reading from the N-terminus, the 267-residue chain is Carboxy-S-adenosyl-L-methionine synthase (267 aa).

The segment covering 1 to 11 (MPNRDTQSQND) has biased composition (polar residues). Positions 1–25 (MPNRDTQSQNDTPRHSPEAAEPQRD) are disordered. Positions 12–24 (TPRHSPEAAEPQR) are enriched in basic and acidic residues. Residues Tyr-59, 84–86 (GCS), 109–110 (DN), 137–138 (DI), Asn-152, and Arg-219 each bind S-adenosyl-L-methionine.

The protein belongs to the class I-like SAM-binding methyltransferase superfamily. Cx-SAM synthase family. Homodimer.

It carries out the reaction prephenate + S-adenosyl-L-methionine = carboxy-S-adenosyl-L-methionine + 3-phenylpyruvate + H2O. Catalyzes the conversion of S-adenosyl-L-methionine (SAM) to carboxy-S-adenosyl-L-methionine (Cx-SAM). The sequence is that of Carboxy-S-adenosyl-L-methionine synthase from Yersinia pseudotuberculosis serotype O:1b (strain IP 31758).